We begin with the raw amino-acid sequence, 367 residues long: Phosphoribosylaminoimidazole-succinocarboxamide synthase (367 aa).

It belongs to the SAICAR synthetase family.

It catalyses the reaction 5-amino-1-(5-phospho-D-ribosyl)imidazole-4-carboxylate + L-aspartate + ATP = (2S)-2-[5-amino-1-(5-phospho-beta-D-ribosyl)imidazole-4-carboxamido]succinate + ADP + phosphate + 2 H(+). It participates in purine metabolism; IMP biosynthesis via de novo pathway; 5-amino-1-(5-phospho-D-ribosyl)imidazole-4-carboxamide from 5-amino-1-(5-phospho-D-ribosyl)imidazole-4-carboxylate: step 1/2. The protein is Phosphoribosylaminoimidazole-succinocarboxamide synthase of Shewanella oneidensis (strain ATCC 700550 / JCM 31522 / CIP 106686 / LMG 19005 / NCIMB 14063 / MR-1).